Consider the following 307-residue polypeptide: Geranylgeranyl diphosphate synthase (307 aa).

Lysine 52, arginine 55, and histidine 86 together coordinate isopentenyl diphosphate. Residues aspartate 93 and aspartate 99 each coordinate Mg(2+). Arginine 104 contacts (2E,6E)-farnesyl diphosphate. Arginine 105 serves as a coordination point for isopentenyl diphosphate. The (2E,6E)-farnesyl diphosphate site is built by lysine 188, threonine 189, and glutamine 226.

It belongs to the FPP/GGPP synthase family. It depends on Mg(2+) as a cofactor.

The enzyme catalyses isopentenyl diphosphate + (2E,6E)-farnesyl diphosphate = (2E,6E,10E)-geranylgeranyl diphosphate + diphosphate. Its pathway is isoprenoid biosynthesis; geranylgeranyl diphosphate biosynthesis; geranylgeranyl diphosphate from farnesyl diphosphate and isopentenyl diphosphate: step 1/1. Catalyzes the condensation of farnesyl diphosphate (FPP) and isopentenyl diphosphate (IPP) to yield geranylgeranyl diphosphate (GGPP) needed for biosynthesis of carotenoids and diterpenes. The protein is Geranylgeranyl diphosphate synthase (crtE) of Pseudescherichia vulneris (Escherichia vulneris).